The primary structure comprises 1331 residues: NPC1-like intracellular cholesterol transporter 1 (1331 aa).

An N-terminal signal peptide occupies residues 1–20 (MAAAWLGWLLWALLLSAAQG). The Extracellular portion of the chain corresponds to 21 to 282 (ELYTPKHEAG…RPSFYMGRMP (262 aa)). 9 disulfides stabilise this stretch: C32-C90, C38-C56, C77-C125, C91-C129, C113-C254, C116-C172, C189-C197, C243-C259, and C256-C263. N-linked (GlcNAc...) asparagine glycosylation is found at N53 and N85. N138 carries an N-linked (GlcNAc...) asparagine glycan. N-linked (GlcNAc...) asparagine glycosylation occurs at N244. A helical membrane pass occupies residues 283–303 (GWLALIIIFTAVFVLLSAVLV). Over 304-352 (RLRVVSNRNKNKAEGPQEAPKLPHKHKLSPHTILGRFFQNWGTRVASWP) the chain is Cytoplasmic. A helical membrane pass occupies residues 353–373 (LTVLALSFIVVIALAAGLTFI). Residues 374-632 (ELTTDPVELW…DEINRTTIQD (259 aa)) are Extracellular-facing. 6 N-linked (GlcNAc...) asparagine glycosylation sites follow: N416, N431, N464, N479, N497, and N506. Cysteines 471 and 485 form a disulfide. A disulfide bond links C525 and C542. N606 and N626 each carry an N-linked (GlcNAc...) asparagine glycan. Positions 632–797 (DLPVFAVSYI…MTAFVALLSL (166 aa)) constitute an SSD domain. The chain crosses the membrane as a helical span at residues 633–653 (LPVFAVSYIIVFLYISLALGS). Residues 654–665 (YSRCSRVAVESK) lie on the Cytoplasmic side of the membrane. A helical membrane pass occupies residues 666–686 (ATLGLGGVIVVLGAVLAAMGF). Topologically, residues 687-696 (YSYLGVPSSL) are extracellular. The helical transmembrane segment at 697–717 (VIIQVVPFLVLAVGADNIFIF) threads the bilayer. Residues 718–742 (VLEYQRLPRMPGEQREAHIGRTLGS) lie on the Cytoplasmic side of the membrane. The helical transmembrane segment at 743 to 763 (VAPSMLLCSLSEAICFFLGAL) threads the bilayer. Residues 764 to 776 (TPMPAVRTFALTS) are Extracellular-facing. The helical transmembrane segment at 777-797 (GLAIILDFLLQMTAFVALLSL) threads the bilayer. Residues 798–846 (DSKRQEASRPDVLCCFSTRKLPPPKEKEGLLLRFFRKIYAPFLLHRFIR) lie on the Cytoplasmic side of the membrane. The chain crosses the membrane as a helical span at residues 847 to 867 (PVVMLLFLTLFGANLYLMCNI). Over 868–1113 (NVGLDQELAL…QQYLTVLPEG (246 aa)) the chain is Extracellular. N909 and N917 each carry an N-linked (GlcNAc...) asparagine glycan. 3 disulfide bridges follow: C920/C925, C967/C1025, and C981/C990. N-linked (GlcNAc...) asparagine glycans are attached at residues N996, N1038, and N1076. A helical membrane pass occupies residues 1114–1134 (IFTLALCFVPTFVVCYLLLGL). Residues 1135 to 1142 (DMCSGILN) lie on the Cytoplasmic side of the membrane. The chain crosses the membrane as a helical span at residues 1143–1163 (LLSIIMILVDTIGLMAVWGIS). Over 1164-1165 (YN) the chain is Extracellular. The helical transmembrane segment at 1166–1186 (AVSLINLVTAVGMSVEFVSHI) threads the bilayer. Over 1187-1206 (TRSFAVSTKPTRLERAKDAT) the chain is Cytoplasmic. A helical transmembrane segment spans residues 1207–1227 (VFMGSAVFAGVAMTNFPGILI). At 1228-1242 (LGFAQAQLIQIFFFR) the chain is on the extracellular side. A helical membrane pass occupies residues 1243 to 1263 (LNLLITLLGLLHGLVFLPVVL). The Cytoplasmic segment spans residues 1264–1331 (SYLGPDVNQA…SSLPKSDQKF (68 aa)).

The protein belongs to the patched family. As to quaternary structure, interacts with RAB11A, MYO5B and RAB11FIP2. Interaction with RAB11A, MYO5B and RAB11FIP2 is required for proper transport to the plasma membrane upon cholesterol depletion. Interacts with NPC2. Interacts with LIMA1. In terms of processing, highly glycosylated. As to expression, small intestine showed the highest level of expression. Expression in other tissues including gall bladder, liver, testis and stomach is also observed. Along the duodenum-ileum axis, the levels vary in different segments of the intestine with peak expression in the proximal jejunum. Protein expression is confined to the enterocyte. Discrete localization to the epithelial layer bordering the luminal space along the crypt-villus axis. Protein expression in the enterocyte is observed closest to the luminal space. Expression in enterocytes from the proximal (jejunum) but not in the distal (ileum) region.

It is found in the apical cell membrane. Its subcellular location is the cell membrane. It catalyses the reaction cholesterol(in) = cholesterol(out). The enzyme catalyses sitosterol(out) = sitosterol(in). Functionally, plays a major role in cholesterol homeostasis. Critical for the uptake of cholesterol across the plasma membrane of the intestinal enterocyte. Involved in plant sterol absorption, it transports sitosterol, although at lower rates than cholesterol. Is the direct molecular target of ezetimibe, a drug that inhibits cholesterol absorption and is approved for the treatment of hypercholesterolemia. May have a function in the transport of multiple lipids and their homeostasis, thereby influencing lipid metabolism regulation. May be involved in caveolin trafficking from the plasma membrane. Acts as a negative regulator of NPC2 and down-regulates its expression and secretion by inhibiting its maturation and accelerating its degradation. This is NPC1-like intracellular cholesterol transporter 1 from Rattus norvegicus (Rat).